We begin with the raw amino-acid sequence, 289 residues long: Type II methyltransferase M.MjaIII (289 aa).

Residues tryptophan 9, lysine 13, aspartate 63, and aspartate 199 each coordinate S-adenosyl-L-methionine.

This sequence belongs to the N(4)/N(6)-methyltransferase family.

The catalysed reaction is a 2'-deoxyadenosine in DNA + S-adenosyl-L-methionine = an N(6)-methyl-2'-deoxyadenosine in DNA + S-adenosyl-L-homocysteine + H(+). Functionally, an alpha subtype methylase that recognizes the double-stranded sequence 5'-GATC-3', methylates A-2 on both strands, and protects the DNA from cleavage by the MjaIII endonuclease. This chain is Type II methyltransferase M.MjaIII (mjaIIIM), found in Methanocaldococcus jannaschii (strain ATCC 43067 / DSM 2661 / JAL-1 / JCM 10045 / NBRC 100440) (Methanococcus jannaschii).